A 284-amino-acid polypeptide reads, in one-letter code: 3-methyl-2-oxobutanoate hydroxymethyltransferase 2 (284 aa).

The Mg(2+) site is built by Asp-49 and Asp-88. 3-methyl-2-oxobutanoate is bound by residues 49–50, Asp-88, and Lys-118; that span reads DS. Glu-120 is a Mg(2+) binding site. Glu-187 functions as the Proton acceptor in the catalytic mechanism.

Belongs to the PanB family. Homodecamer; pentamer of dimers. Requires Mg(2+) as cofactor.

The protein localises to the cytoplasm. It carries out the reaction 3-methyl-2-oxobutanoate + (6R)-5,10-methylene-5,6,7,8-tetrahydrofolate + H2O = 2-dehydropantoate + (6S)-5,6,7,8-tetrahydrofolate. It functions in the pathway cofactor biosynthesis; (R)-pantothenate biosynthesis; (R)-pantoate from 3-methyl-2-oxobutanoate: step 1/2. Functionally, catalyzes the reversible reaction in which hydroxymethyl group from 5,10-methylenetetrahydrofolate is transferred onto alpha-ketoisovalerate to form ketopantoate. This Burkholderia cenocepacia (strain HI2424) protein is 3-methyl-2-oxobutanoate hydroxymethyltransferase 2.